We begin with the raw amino-acid sequence, 555 residues long: Chaperonin GroEL (555 aa).

ATP is bound by residues T29 to P32, K50, D86 to T90, G418, and D499. Positions H528 to F555 are disordered. The segment covering R537 to F555 has biased composition (gly residues).

This sequence belongs to the chaperonin (HSP60) family. In terms of assembly, forms a cylinder of 14 subunits composed of two heptameric rings stacked back-to-back. Interacts with the co-chaperonin GroES.

Its subcellular location is the cytoplasm. It catalyses the reaction ATP + H2O + a folded polypeptide = ADP + phosphate + an unfolded polypeptide.. Together with its co-chaperonin GroES, plays an essential role in assisting protein folding. The GroEL-GroES system forms a nano-cage that allows encapsulation of the non-native substrate proteins and provides a physical environment optimized to promote and accelerate protein folding. The polypeptide is Chaperonin GroEL (Orientia tsutsugamushi (strain Ikeda) (Rickettsia tsutsugamushi)).